We begin with the raw amino-acid sequence, 398 residues long: MLPRFLTASYPMERHYFMVPKFALSLIGFYPEQKRTVLVKLWSFFNFFILTYGCYAEAYYGIHYIPINIATALDALCPVASSILSLVKMVAIWWYQDELRSLIERVRFLTEQQKSKRKLGYKKRFYTLATQLTFLLLCCGFCTSTSYSVRHLIDNILRRTHGKDWIYETPFKMMFPDLLLRLPLYPITYILVHWHGYITVVCFVGADGFFLGFCLYFTVLLLCLQDDVCDLLEVENIEKSPSEAEEARIVREMEKLVDRHNEVAELTERLSGVMVEITLAHFVTSSLIIGTSVVDILLFSGLGIIVYVVYTCAVGVEIFLYCLGGSHIMEACSNLARSTFSSHWYGHSVRVQKMTLLMVARAQRVLTIKIPFFSPSLETLTSILRFTGSLIALAKSVI.

At 1-14 (MLPRFLTASYPMER) the chain is on the cytoplasmic side. A helical membrane pass occupies residues 15-31 (HYFMVPKFALSLIGFYP). Residues 32-46 (EQKRTVLVKLWSFFN) lie on the Extracellular side of the membrane. A helical membrane pass occupies residues 47-67 (FFILTYGCYAEAYYGIHYIPI). Topologically, residues 68–74 (NIATALD) are cytoplasmic. Residues 75-95 (ALCPVASSILSLVKMVAIWWY) form a helical membrane-spanning segment. The Extracellular segment spans residues 96-124 (QDELRSLIERVRFLTEQQKSKRKLGYKKR). The chain crosses the membrane as a helical span at residues 125 to 145 (FYTLATQLTFLLLCCGFCTST). The Cytoplasmic segment spans residues 146–199 (SYSVRHLIDNILRRTHGKDWIYETPFKMMFPDLLLRLPLYPITYILVHWHGYIT). A helical transmembrane segment spans residues 200–220 (VVCFVGADGFFLGFCLYFTVL). Residues 221-269 (LLCLQDDVCDLLEVENIEKSPSEAEEARIVREMEKLVDRHNEVAELTER) are Extracellular-facing. The chain crosses the membrane as a helical span at residues 270-290 (LSGVMVEITLAHFVTSSLIIG). The Cytoplasmic portion of the chain corresponds to 291–295 (TSVVD). A helical transmembrane segment spans residues 296 to 316 (ILLFSGLGIIVYVVYTCAVGV). Topologically, residues 317–398 (EIFLYCLGGS…SLIALAKSVI (82 aa)) are extracellular.

The protein belongs to the insect chemoreceptor superfamily. Heteromeric odorant receptor channel (TC 1.A.69) family. Or1a subfamily. As to quaternary structure, interacts with Orco. Complexes exist early in the endomembrane system in olfactory sensory neurons (OSNs), coupling these complexes to the conserved ciliary trafficking pathway. Not expressed in either the antenna or maxillary palp.

It is found in the cell membrane. Odorant receptor which mediates acceptance or avoidance behavior, depending on its substrates. The odorant receptor repertoire encodes a large collection of odor stimuli that vary widely in identity, intensity, and duration. May form a complex with Orco to form odorant-sensing units, providing sensitive and prolonged odorant signaling and calcium permeability. Involved in the behavioral responses to pentanol, hexanol, octanol, nonanol, propyl acetate, butyl acetate, isoamyl acetate, methyl caproate, anisole, heptanal, 2-heptanone, r-carvone, and nonanoic acid. Also responds to pyrazines. This chain is Odorant receptor 24a (Or24a), found in Drosophila melanogaster (Fruit fly).